The chain runs to 287 residues: Lectin 10 (287 aa).

Over 1–11 the chain is Cytoplasmic; sequence MALSNLKSNRT. Residues 12-31 form a helical membrane-spanning segment; sequence LSSSLITIFIISLFLQYHNI. Topologically, residues 32–287 are extracellular; sequence KSQSSWQSRQ…IINWSFESAL (256 aa). Residues Asn-124, Asn-147, Asn-243, and Asn-280 are each glycosylated (N-linked (GlcNAc...) asparagine).

The protein belongs to the leguminous lectin family.

The protein localises to the membrane. In terms of biological role, may be involved in arbuscular mycorrhizal (AM) symbiosis with AM fungi. The sequence is that of Lectin 10 from Medicago truncatula (Barrel medic).